Consider the following 432-residue polypeptide: Myb family transcription factor EFM (432 aa).

A coiled-coil region spans residues 36–81 (LEDLLSRLEQERLKIDAFKRELPLCMQLLNNAVEVYKQQLEAYRAN). Composition is skewed to polar residues over residues 123-139 (SQSETKPKNIDSTTDQS) and 187-197 (SPTNEHTNGQD). The tract at residues 123–237 (SQSETKPKNI…SQSNRKARRC (115 aa)) is disordered. Residues 201–231 (ESMINNDNNYNNNNNNNSNSNGVSSTTSQSN) are compositionally biased toward low complexity. Residues 230-290 (SNRKARRCWS…HLQKYRLHTR (61 aa)) form the HTH myb-type domain. A DNA-binding region (H-T-H motif) is located at residues 261 to 286 (PKQIRELMKVDGLTNDEVKSHLQKYR). A disordered region spans residues 354–412 (FYTTPPPPQPLHHHHFQTFNGSSGGTASTDSTHHQVTDSPTVEGKSPESGGGERKGLAA).

Interacts with JMJ30, but not with SVP, FLC or CO. In terms of tissue distribution, specifically expressed in vascular tissues of cotyledons, rosette leaves and cauline leaves. Not detected in the vegetative shoot apical meristem.

It localises to the nucleus. Transcription factor acting as a flowering repressor, directly repressing FT expression in a dosage-dependent manner in the leaf vasculature. The chain is Myb family transcription factor EFM from Arabidopsis thaliana (Mouse-ear cress).